The sequence spans 286 residues: Probable syntaxin-7B (286 aa).

At 1 to 257 the chain is on the cytoplasmic side; sequence MTDRQPLISK…YVYKSSYRKK (257 aa). Positions 97 to 107 are enriched in basic and acidic residues; it reads LSTSNKKESSH. A disordered region spans residues 97–160; it reads LSTSNKKESS…TNNNNNNNNN (64 aa). A compositionally biased stretch (low complexity) spans 114-160; sequence QQQQQQQNNGNSNNNGYNTRGGYNQQQQQQQQQYNDYTNNNNNNNNN. The 63-residue stretch at 185–247 folds into the t-SNARE coiled-coil homology domain; it reads NRILDERNAN…EDAVVELEKA (63 aa). The chain crosses the membrane as a helical; Anchor for type IV membrane protein span at residues 258–278; sequence MIIFVICLLVTLVAVGIFLAI. The Vesicular segment spans residues 279–286; the sequence is YYGVIKKK.

This sequence belongs to the syntaxin family.

Its subcellular location is the membrane. The protein is Probable syntaxin-7B (syn7B) of Dictyostelium discoideum (Social amoeba).